A 93-amino-acid chain; its full sequence is Consomatin G1 (93 aa).

Positions 1–22 are cleaved as a signal peptide; sequence MQTAYWVMLMMMVCITAPLPEG. Residues 23–69 constitute a propeptide that is removed on maturation; sequence GKPNSGIRGLVPNDLTPQHTLRSLISRRQTDVLLDATLLTTPAPEQR. Cysteine 72 and cysteine 77 are disulfide-bonded. Residue tryptophan 74 is modified to D-tryptophan. Positions 79–93 are excised as a propeptide; the sequence is PRPYPWRRRDLNGKR.

The protein belongs to the conotoxin C superfamily. Consomatin family. Expressed by the venom duct.

The protein resides in the secreted. Potently activates human somatostatin receptors (SSTR) with a specific activation of SSTR2 (EC(50)=2.6 nM). The protein is Consomatin G1 of Conus geographus (Geography cone).